Consider the following 952-residue polypeptide: Chaperone protein ClpC2, chloroplastic (952 aa).

The transit peptide at 1–45 directs the protein to the chloroplast; sequence MAWSIALLTPPFFGPGRHVQAKEYREPRGCVMKMSSLKAPVLRIQ. Positions 115 to 257 constitute a Clp R domain; that stretch reads FERFTEKAIK…RTQVIRMVGE (143 aa). Repeat regions lie at residues 118-183 and 193-257; these read FTEK…IGRG and FTPR…MVGE. Residues 278–525 form an i region; that stretch reads LEEYGTNLTK…RVRLRHAQLP (248 aa). 323–330 lines the ATP pocket; sequence GEPGVGKT. The region spanning 532 to 567 is the UVR domain; sequence EKQLRQITKEKNEAVRSQDFEMAGSHRDREIELKAE. The segment at 592–783 is II; that stretch reads VTESDIQHIV…LLIMTSNVGS (192 aa). 666–673 is an ATP binding site; sequence GPTGVGKS.

This sequence belongs to the ClpA/ClpB family. ClpC subfamily. In terms of assembly, homodimer and homohexamer. Hexamerization upon addition of ATP. Interacts with CLPT1. Interacts with CLPS1. Stably associated with the import machinery. Interacts with CLPF. The cofactor is Mg(2+). Expressed at low levels in roots and inflorescences. Expressed at very low levels in rosette leaves. Expressed in photosynthetic green tissues with high levels in young, developing leaf tissues.

It is found in the plastid. The protein resides in the chloroplast stroma. Its subcellular location is the chloroplast membrane. It carries out the reaction ATP + H2O = ADP + phosphate + H(+). In terms of biological role, molecular chaperone. May act as a suppressor of FtsH-mediated thylakoid membrane biogenesis and may enhance photoinhibition. Seems not involved in chloroplastic protein import. Probable component of the TIC-associated stromal import motor involved in inner membrane translocation. Has an ATPase activity, but no ADPase activity. Interacts with transit peptides with a positional preference. Localization of the signal sequence at the N-terminal end of a protein seems mandatory for interaction to take place. The chain is Chaperone protein ClpC2, chloroplastic from Arabidopsis thaliana (Mouse-ear cress).